We begin with the raw amino-acid sequence, 309 residues long: Protease HtpX homolog (309 aa).

A run of 2 helical transmembrane segments spans residues 7 to 27 and 28 to 48; these read AILL…IGGA and SGAM…YWNS. Residue H130 coordinates Zn(2+). E131 is a catalytic residue. H134 is a Zn(2+) binding site. 2 helical membrane passes run 145 to 165 and 173 to 193; these read VTAT…FFGG and GLGV…AMLV. E202 provides a ligand contact to Zn(2+).

The protein belongs to the peptidase M48B family. Zn(2+) is required as a cofactor.

The protein resides in the cell inner membrane. This Rhodopseudomonas palustris (strain BisA53) protein is Protease HtpX homolog.